The sequence spans 423 residues: Histidinol dehydrogenase (423 aa).

NAD(+)-binding residues include Y116, Q177, and N200. Residues S223, Q245, and H248 each coordinate substrate. Zn(2+) contacts are provided by Q245 and H248. Active-site proton acceptor residues include E313 and H314. The substrate site is built by H314, D347, E401, and H406. D347 contributes to the Zn(2+) binding site. H406 serves as a coordination point for Zn(2+).

It belongs to the histidinol dehydrogenase family. It depends on Zn(2+) as a cofactor.

The catalysed reaction is L-histidinol + 2 NAD(+) + H2O = L-histidine + 2 NADH + 3 H(+). Its pathway is amino-acid biosynthesis; L-histidine biosynthesis; L-histidine from 5-phospho-alpha-D-ribose 1-diphosphate: step 9/9. Catalyzes the sequential NAD-dependent oxidations of L-histidinol to L-histidinaldehyde and then to L-histidine. In Staphylococcus saprophyticus subsp. saprophyticus (strain ATCC 15305 / DSM 20229 / NCIMB 8711 / NCTC 7292 / S-41), this protein is Histidinol dehydrogenase.